The sequence spans 304 residues: MAATLRELRGRIRSAGSIKKITKAQELIATSRIARAQARLESARPYADQITQMLTTLAADAALDHPLLVEHPQPKRAGVLVVSSDRGLCGAYNANVFRRSEELFSLLRDEGKQPVLYVVGRKALAYYTFRNWDIAQSWTGFSEQPKYENAAEIASTLVDAFMLGAGEGEDQQTNNEQSVDELHIVFTEFKSMLSQSTEARRMAPMVVEYVEETGPRTLYSFEPDATTLFESLLPRYLTTRVYAAMLESAASELASRQRAMKSATDNADDLIKALTLMANRERQAQITQEISEIVGGANALADAR.

Belongs to the ATPase gamma chain family. In terms of assembly, F-type ATPases have 2 components, CF(1) - the catalytic core - and CF(0) - the membrane proton channel. CF(1) has five subunits: alpha(3), beta(3), gamma(1), delta(1), epsilon(1). CF(0) has three main subunits: a, b and c.

The protein resides in the cell membrane. Functionally, produces ATP from ADP in the presence of a proton gradient across the membrane. The gamma chain is believed to be important in regulating ATPase activity and the flow of protons through the CF(0) complex. This Mycobacterium marinum (strain ATCC BAA-535 / M) protein is ATP synthase gamma chain.